Consider the following 836-residue polypeptide: Translation initiation factor IF-2 (836 aa).

Residues 1–234 (MSDTDGKKPL…SLAAMKRKQE (234 aa)) are disordered. The segment covering 18–27 (SGQVKQSFSH) has biased composition (polar residues). Residues 50 to 60 (SGSSTTTSSPS) are compositionally biased toward low complexity. Over residues 88–156 (KLREVEDAKR…ATRRAEEAKR (69 aa)) the composition is skewed to basic and acidic residues. The span at 167–176 (PAESRASAPP) shows a compositional bias: low complexity. Basic and acidic residues predominate over residues 185-206 (SRKEREREADRDRTTKKDDSRR). Residues 333–501 (PRPPIITIMG…NIALQAEILD (169 aa)) enclose the tr-type G domain. The segment at 342–349 (GHVDHGKT) is G1. 342–349 (GHVDHGKT) contributes to the GTP binding site. Residues 367 to 371 (GITQH) form a G2 region. Residues 389–392 (DTPG) are G3. Residues 389-393 (DTPGH) and 443-446 (NKID) contribute to the GTP site. Positions 443–446 (NKID) are G4. Residues 479–481 (SAK) form a G5 region.

The protein belongs to the TRAFAC class translation factor GTPase superfamily. Classic translation factor GTPase family. IF-2 subfamily.

Its subcellular location is the cytoplasm. Its function is as follows. One of the essential components for the initiation of protein synthesis. Protects formylmethionyl-tRNA from spontaneous hydrolysis and promotes its binding to the 30S ribosomal subunits. Also involved in the hydrolysis of GTP during the formation of the 70S ribosomal complex. The polypeptide is Translation initiation factor IF-2 (Cereibacter sphaeroides (strain ATCC 17029 / ATH 2.4.9) (Rhodobacter sphaeroides)).